A 283-amino-acid chain; its full sequence is Tetrahydroxynaphthalene reductase (283 aa).

A disordered region spans residues Met1–Gly21. Arg39–Ser63 contributes to the NADP(+) binding site. Position 164 (Ser164) interacts with substrate. Tyr178 acts as the Proton acceptor in catalysis.

Belongs to the short-chain dehydrogenases/reductases (SDR) family. In terms of assembly, homotetramer.

It carries out the reaction scytalone + NADP(+) = naphthalene-1,3,6,8-tetrol + NADPH + H(+). Its pathway is pigment biosynthesis; melanin biosynthesis. Catalyzes the NADPH-dependent reduction of 1,3,6,8-tetrahydroxynaphthalene (T4HN) into (+)-scytalone and 1,3,8-trihydroxynaphthalene into (-)-vermelone. This enzyme is the biochemical target of several commercially important fungicides which are used to prevent blast disease in rice plants. In Pyricularia oryzae (strain 70-15 / ATCC MYA-4617 / FGSC 8958) (Rice blast fungus), this protein is Tetrahydroxynaphthalene reductase.